The following is a 319-amino-acid chain: uncharacterized protein (319 aa).

The segment at 21–70 is disordered; the sequence is ETETLKNSTDEVQTSSSFSSSGGRQSSPLTSGSKLEREKQTPSLEQGDTQ. Residues 25 to 34 show a composition bias toward polar residues; that stretch reads LKNSTDEVQT. The segment covering 35-51 has biased composition (low complexity); sequence SSSFSSSGGRQSSPLTS. Polar residues predominate over residues 61–70; that stretch reads TPSLEQGDTQ.

This is an uncharacterized protein from Homo sapiens (Human).